The sequence spans 76 residues: Conotoxin VnMEKL-0111 (76 aa).

Residues methionine 1 to alanine 18 form the signal peptide. The propeptide occupies leucine 19–arginine 45. Cystine bridges form between cysteine 49–cysteine 65, cysteine 56–cysteine 70, and cysteine 64–cysteine 74.

Belongs to the conotoxin O2 superfamily. Expressed by the venom duct.

It localises to the secreted. The sequence is that of Conotoxin VnMEKL-0111 from Conus ventricosus (Mediterranean cone).